A 163-amino-acid chain; its full sequence is Protein-export protein SecB (163 aa).

This sequence belongs to the SecB family. As to quaternary structure, homotetramer, a dimer of dimers. One homotetramer interacts with 1 SecA dimer.

The protein resides in the cytoplasm. In terms of biological role, one of the proteins required for the normal export of preproteins out of the cell cytoplasm. It is a molecular chaperone that binds to a subset of precursor proteins, maintaining them in a translocation-competent state. It also specifically binds to its receptor SecA. The chain is Protein-export protein SecB from Brucella abortus (strain S19).